The primary structure comprises 363 residues: Electron transfer flavoprotein subunit alpha, mitochondrial (363 aa).

A mitochondrion-targeting transit peptide spans 1–24; sequence MTRTVLLRALTKNKFVASNAPRSI. Residue 303 to 331 participates in FAD binding; that stretch reads LYMAFGVSGAIQHLAGIKDSKVIVAVNKD.

It belongs to the ETF alpha-subunit/FixB family. In terms of assembly, heterodimer of an alpha and a beta subunit. FAD serves as cofactor.

The protein localises to the mitochondrion matrix. In terms of biological role, the electron transfer flavoprotein serves as a specific electron acceptor for several dehydrogenases, including five acyl-CoA dehydrogenases, glutaryl-CoA and sarcosine dehydrogenase. It transfers the electrons to the main mitochondrial respiratory chain via ETF-ubiquinone oxidoreductase (ETF dehydrogenase). Involved in leucine catabolism and in phytol degradation. The polypeptide is Electron transfer flavoprotein subunit alpha, mitochondrial (ETFA) (Arabidopsis thaliana (Mouse-ear cress)).